Here is an 83-residue protein sequence, read N- to C-terminus: Small ribosomal subunit protein uS17c (83 aa).

Belongs to the universal ribosomal protein uS17 family. As to quaternary structure, part of the 30S ribosomal subunit.

It is found in the plastid. Its subcellular location is the chloroplast. One of the primary rRNA binding proteins, it binds specifically to the 5'-end of 16S ribosomal RNA. This is Small ribosomal subunit protein uS17c (rps17) from Pyropia yezoensis (Susabi-nori).